Reading from the N-terminus, the 337-residue chain is Biotin synthase (337 aa).

One can recognise a Radical SAM core domain in the interval 58-288; that stretch reads AGSELLHACS…AHPHKIIKFA (231 aa). [4Fe-4S] cluster contacts are provided by C76, C80, and C83. [2Fe-2S] cluster is bound by residues C155, C216, and K286.

Belongs to the radical SAM superfamily. Biotin synthase family. Homodimer. The cofactor is [4Fe-4S] cluster. [2Fe-2S] cluster serves as cofactor.

The enzyme catalyses (4R,5S)-dethiobiotin + (sulfur carrier)-SH + 2 reduced [2Fe-2S]-[ferredoxin] + 2 S-adenosyl-L-methionine = (sulfur carrier)-H + biotin + 2 5'-deoxyadenosine + 2 L-methionine + 2 oxidized [2Fe-2S]-[ferredoxin]. The protein operates within cofactor biosynthesis; biotin biosynthesis; biotin from 7,8-diaminononanoate: step 2/2. Catalyzes the conversion of dethiobiotin (DTB) to biotin by the insertion of a sulfur atom into dethiobiotin via a radical-based mechanism. The polypeptide is Biotin synthase (Pelodictyon phaeoclathratiforme (strain DSM 5477 / BU-1)).